A 341-amino-acid chain; its full sequence is Phosphate acyltransferase (341 aa).

This sequence belongs to the PlsX family. Homodimer. Probably interacts with PlsY.

The protein localises to the cytoplasm. The catalysed reaction is a fatty acyl-[ACP] + phosphate = an acyl phosphate + holo-[ACP]. It functions in the pathway lipid metabolism; phospholipid metabolism. Catalyzes the reversible formation of acyl-phosphate (acyl-PO(4)) from acyl-[acyl-carrier-protein] (acyl-ACP). This enzyme utilizes acyl-ACP as fatty acyl donor, but not acyl-CoA. This is Phosphate acyltransferase from Saccharophagus degradans (strain 2-40 / ATCC 43961 / DSM 17024).